A 179-amino-acid polypeptide reads, in one-letter code: Large ribosomal subunit protein uL6 (179 aa).

Belongs to the universal ribosomal protein uL6 family. In terms of assembly, part of the 50S ribosomal subunit.

This protein binds to the 23S rRNA, and is important in its secondary structure. It is located near the subunit interface in the base of the L7/L12 stalk, and near the tRNA binding site of the peptidyltransferase center. This Streptomyces avermitilis (strain ATCC 31267 / DSM 46492 / JCM 5070 / NBRC 14893 / NCIMB 12804 / NRRL 8165 / MA-4680) protein is Large ribosomal subunit protein uL6.